Consider the following 1342-residue polypeptide: DNA-directed RNA polymerase subunit beta (1342 aa).

The protein belongs to the RNA polymerase beta chain family. As to quaternary structure, the RNAP catalytic core consists of 2 alpha, 1 beta, 1 beta' and 1 omega subunit. When a sigma factor is associated with the core the holoenzyme is formed, which can initiate transcription.

It carries out the reaction RNA(n) + a ribonucleoside 5'-triphosphate = RNA(n+1) + diphosphate. DNA-dependent RNA polymerase catalyzes the transcription of DNA into RNA using the four ribonucleoside triphosphates as substrates. This is DNA-directed RNA polymerase subunit beta from Actinobacillus pleuropneumoniae serotype 3 (strain JL03).